A 322-amino-acid polypeptide reads, in one-letter code: tRNA U34 carboxymethyltransferase (322 aa).

Carboxy-S-adenosyl-L-methionine is bound by residues K91, W105, K110, G129, 179-180 (LE), M195, Y199, and R314.

It belongs to the class I-like SAM-binding methyltransferase superfamily. CmoB family. As to quaternary structure, homotetramer.

The enzyme catalyses carboxy-S-adenosyl-L-methionine + 5-hydroxyuridine(34) in tRNA = 5-carboxymethoxyuridine(34) in tRNA + S-adenosyl-L-homocysteine + H(+). Its function is as follows. Catalyzes carboxymethyl transfer from carboxy-S-adenosyl-L-methionine (Cx-SAM) to 5-hydroxyuridine (ho5U) to form 5-carboxymethoxyuridine (cmo5U) at position 34 in tRNAs. The sequence is that of tRNA U34 carboxymethyltransferase from Pseudomonas paraeruginosa (strain DSM 24068 / PA7) (Pseudomonas aeruginosa (strain PA7)).